The primary structure comprises 304 residues: tRNA-uridine aminocarboxypropyltransferase 1 (304 aa).

S2 carries the post-translational modification N-acetylserine. A DXTW motif is present at residues 206-209 (DSTW).

This sequence belongs to the TDD superfamily. DTWD1 family.

Its subcellular location is the nucleus. The catalysed reaction is a uridine in tRNA + S-adenosyl-L-methionine = a 3-[(3S)-3-amino-3-carboxypropyl]uridine in tRNA + S-methyl-5'-thioadenosine + H(+). Catalyzes the formation of 3-(3-amino-3-carboxypropyl)uridine (acp3U) at position 20 in the D-loop of several cytoplasmic tRNAs (acp3U(20)). The protein is tRNA-uridine aminocarboxypropyltransferase 1 of Homo sapiens (Human).